The following is a 395-amino-acid chain: Acetate kinase (395 aa).

Mg(2+) is bound at residue Asn10. Residue Lys17 participates in ATP binding. Residue Arg87 participates in substrate binding. The active-site Proton donor/acceptor is the Asp144. ATP contacts are provided by residues 204–208, 279–281, and 327–331; these read HLGNG, DMR, and GIGEN. Glu381 is a Mg(2+) binding site.

This sequence belongs to the acetokinase family. In terms of assembly, homodimer. The cofactor is Mg(2+). Requires Mn(2+) as cofactor.

The protein localises to the cytoplasm. The enzyme catalyses acetate + ATP = acetyl phosphate + ADP. It participates in metabolic intermediate biosynthesis; acetyl-CoA biosynthesis; acetyl-CoA from acetate: step 1/2. Catalyzes the formation of acetyl phosphate from acetate and ATP. Can also catalyze the reverse reaction. The chain is Acetate kinase from Stutzerimonas stutzeri (strain A1501) (Pseudomonas stutzeri).